Here is a 201-residue protein sequence, read N- to C-terminus: MQPFTCHTGLAVMIDSANIDTDQIIPKQFLSKVTRDGFGVHLFHDWRYLDDAGDVPNPEFTLNKPRYNGASILLAQENFGCGSSREHAPWALADFGLRAIIAPSFADIFYGNSINNGLLPVKLSANEVRQLMDEVASEEGAQITVDLTTCQVTSPSGAQFSFSLAESARHKLLNGLDAIGLTLSHGAQISEYESQIPSWRR.

This sequence belongs to the LeuD family. LeuD type 1 subfamily. Heterodimer of LeuC and LeuD.

It catalyses the reaction (2R,3S)-3-isopropylmalate = (2S)-2-isopropylmalate. It functions in the pathway amino-acid biosynthesis; L-leucine biosynthesis; L-leucine from 3-methyl-2-oxobutanoate: step 2/4. In terms of biological role, catalyzes the isomerization between 2-isopropylmalate and 3-isopropylmalate, via the formation of 2-isopropylmaleate. This Shewanella oneidensis (strain ATCC 700550 / JCM 31522 / CIP 106686 / LMG 19005 / NCIMB 14063 / MR-1) protein is 3-isopropylmalate dehydratase small subunit.